Here is a 564-residue protein sequence, read N- to C-terminus: MTIEFSNFTFKYWALEKPTLKNINLTIGKGEKVVIVGPSGSGKSTLGQCLNGLIPFAVKGDCSGSLKINGKDTKSLDLHQCTNIVGTVLQDTDGQFVGLSVGEDIAFALENQMVIQEDMHTIVKDTAKMVELDDILDVSPFDLSGGQKQRVSLAGVMVDDVDILLFDEPLASLDPKTGKAAIDIIDHLHRDTGKTVIIIEHRLEDVLHRPVDRIIMMEQGEIVANMTPDQLIASDLLEQHGIREPLYISALKAAGCQITEDDKPAYFSTLNLDKFKPQIENWYHQSFVACTPENSERLLTVNNLSYSYDGIKNTLDDVSFHINKGEFVSILGKNGSGKSTITRLIMGVLEPDTGSIFMNGQDLAQSSIFERSQKIGIVLQNPNHMISHHMIFDEIASGLRNRGINEATVERKVFDILELCGLKKYRHWPIDALSYGQKKRVTIATILVLEPELLILDEPTAGQDYHHYTLMMEFVRELNRKLGITILIISHDMHLVLEYTQRAIVIANSQLLADAPVNTIFSQPALLEKANLTVTSLYSLAHAMGIERIDNFIHCFIEHEAKNK.

ABC transporter domains follow at residues 3 to 244 and 299 to 533; these read IEFS…GIRE and LTVN…ANLT. ATP-binding positions include 37 to 44 and 332 to 339; these read GPSGSGKS and GKNGSGKS.

This sequence belongs to the ABC transporter superfamily.

The protein resides in the cell inner membrane. Probably part of an ABC transporter complex. Responsible for energy coupling to the transport system. This is Putative ABC transporter ATP-binding protein PBPRA2240 from Photobacterium profundum (strain SS9).